Here is a 154-residue protein sequence, read N- to C-terminus: MKIYEGRLTAEGLKVGIIVSRFNEFITSKLLAGSIDCLKRHGAKEDNIEVCWVPGAFEIPVIAKKMASKGKYDAVICLGAVIRGATPHFDYVSSEVSKGVAHVSLDKEVPVIFGVLTTDTIEQAIERAGTKAGNKGYDAAMSAIEMSNLMKVLD.

5-amino-6-(D-ribitylamino)uracil is bound by residues Phe22, 56-58, and 80-82; these read AFE and AVI. 85 to 86 serves as a coordination point for (2S)-2-hydroxy-3-oxobutyl phosphate; the sequence is AT. His88 (proton donor) is an active-site residue. Phe113 is a 5-amino-6-(D-ribitylamino)uracil binding site. A (2S)-2-hydroxy-3-oxobutyl phosphate-binding site is contributed by Arg127.

It belongs to the DMRL synthase family.

The enzyme catalyses (2S)-2-hydroxy-3-oxobutyl phosphate + 5-amino-6-(D-ribitylamino)uracil = 6,7-dimethyl-8-(1-D-ribityl)lumazine + phosphate + 2 H2O + H(+). It functions in the pathway cofactor biosynthesis; riboflavin biosynthesis; riboflavin from 2-hydroxy-3-oxobutyl phosphate and 5-amino-6-(D-ribitylamino)uracil: step 1/2. Functionally, catalyzes the formation of 6,7-dimethyl-8-ribityllumazine by condensation of 5-amino-6-(D-ribitylamino)uracil with 3,4-dihydroxy-2-butanone 4-phosphate. This is the penultimate step in the biosynthesis of riboflavin. This is 6,7-dimethyl-8-ribityllumazine synthase from Clostridium botulinum (strain ATCC 19397 / Type A).